The primary structure comprises 358 residues: Photosystem II protein D1 (358 aa).

3 consecutive transmembrane segments (helical) span residues 28-45 (YVGW…AAAI), 117-132 (HFLI…QWEL), and 141-155 (WICV…AAFA). Histidine 117 is a binding site for chlorophyll a. Tryptophan 125 is a binding site for pheophytin a. [CaMn4O5] cluster is bound by residues aspartate 169 and glutamate 188. A helical membrane pass occupies residues 196–217 (FHMIGVAGMFGGSLFSAMHGSL). Histidine 197 is a binding site for chlorophyll a. A quinone is bound by residues histidine 214 and 263–264 (SF). Histidine 214 is a Fe cation binding site. Histidine 271 contributes to the Fe cation binding site. The helical transmembrane segment at 273-287 (FLAAWPVICIWITSL) threads the bilayer. Positions 331, 332, 341, and 343 each coordinate [CaMn4O5] cluster. The propeptide occupies 344 to 358 (AAESTPVALIAPAIG).

This sequence belongs to the reaction center PufL/M/PsbA/D family. As to quaternary structure, PSII is composed of 1 copy each of membrane proteins PsbA, PsbB, PsbC, PsbD, PsbE, PsbF, PsbH, PsbI, PsbJ, PsbK, PsbL, PsbM, PsbT, PsbX, PsbY, Psb30/Ycf12, peripheral proteins PsbO, CyanoQ (PsbQ), PsbU, PsbV and a large number of cofactors. It forms dimeric complexes. The cofactor is The D1/D2 heterodimer binds P680, chlorophylls that are the primary electron donor of PSII, and subsequent electron acceptors. It shares a non-heme iron and each subunit binds pheophytin, quinone, additional chlorophylls, carotenoids and lipids. D1 provides most of the ligands for the Mn4-Ca-O5 cluster of the oxygen-evolving complex (OEC). There is also a Cl(-1) ion associated with D1 and D2, which is required for oxygen evolution. The PSII complex binds additional chlorophylls, carotenoids and specific lipids.. Tyr-160 forms a radical intermediate that is referred to as redox-active TyrZ, YZ or Y-Z. Post-translationally, C-terminally processed by CtpA; processing is essential to allow assembly of the oxygen-evolving complex and thus photosynthetic growth.

The protein localises to the cellular thylakoid membrane. It carries out the reaction 2 a plastoquinone + 4 hnu + 2 H2O = 2 a plastoquinol + O2. Functionally, photosystem II (PSII) is a light-driven water:plastoquinone oxidoreductase that uses light energy to abstract electrons from H(2)O, generating O(2) and a proton gradient subsequently used for ATP formation. It consists of a core antenna complex that captures photons, and an electron transfer chain that converts photonic excitation into a charge separation. The D1/D2 (PsbA/PsbD) reaction center heterodimer binds P680, the primary electron donor of PSII as well as several subsequent electron acceptors. The chain is Photosystem II protein D1 from Prochlorococcus marinus (strain MIT 9303).